The chain runs to 128 residues: Small ribosomal subunit protein uS11 (128 aa).

It belongs to the universal ribosomal protein uS11 family. In terms of assembly, part of the 30S ribosomal subunit. Interacts with proteins S7 and S18. Binds to IF-3.

Functionally, located on the platform of the 30S subunit, it bridges several disparate RNA helices of the 16S rRNA. Forms part of the Shine-Dalgarno cleft in the 70S ribosome. This Solidesulfovibrio magneticus (strain ATCC 700980 / DSM 13731 / RS-1) (Desulfovibrio magneticus) protein is Small ribosomal subunit protein uS11.